A 362-amino-acid polypeptide reads, in one-letter code: Chorismate synthase (362 aa).

NADP(+) is bound by residues Arg-48 and Arg-54. Residues 131–133 (RSS), 243–244 (NA), Gly-287, 302–306 (KPTSS), and Arg-328 contribute to the FMN site.

The protein belongs to the chorismate synthase family. In terms of assembly, homotetramer. The cofactor is FMNH2.

It catalyses the reaction 5-O-(1-carboxyvinyl)-3-phosphoshikimate = chorismate + phosphate. It participates in metabolic intermediate biosynthesis; chorismate biosynthesis; chorismate from D-erythrose 4-phosphate and phosphoenolpyruvate: step 7/7. Its function is as follows. Catalyzes the anti-1,4-elimination of the C-3 phosphate and the C-6 proR hydrogen from 5-enolpyruvylshikimate-3-phosphate (EPSP) to yield chorismate, which is the branch point compound that serves as the starting substrate for the three terminal pathways of aromatic amino acid biosynthesis. This reaction introduces a second double bond into the aromatic ring system. The polypeptide is Chorismate synthase (Rhodopseudomonas palustris (strain TIE-1)).